The primary structure comprises 138 residues: L-ectoine synthase (138 aa).

It belongs to the ectoine synthase family.

It catalyses the reaction (2S)-4-acetamido-2-aminobutanoate = L-ectoine + H2O. It functions in the pathway amine and polyamine biosynthesis; ectoine biosynthesis; L-ectoine from L-aspartate 4-semialdehyde: step 3/3. Catalyzes the circularization of gamma-N-acetyl-alpha,gamma-diaminobutyric acid (ADABA) to ectoine (1,4,5,6-tetrahydro-2-methyl-4-pyrimidine carboxylic acid), which is an excellent osmoprotectant. This chain is L-ectoine synthase, found in Vibrio cholerae serotype O1 (strain ATCC 39541 / Classical Ogawa 395 / O395).